A 379-amino-acid chain; its full sequence is SUN domain-containing protein 5 (379 aa).

Residues 1–45 (MPRSSRSPGDPGALLEDVAHNPRPRRIAQRGRNTSRMAEDTSPNM) form a disordered region. Topologically, residues 1–105 (MPRSSRSPGD…LLCQKLMEKT (105 aa)) are nuclear. The span at 31–45 (GRNTSRMAEDTSPNM) shows a compositional bias: polar residues. The chain crosses the membrane as a helical span at residues 106–122 (GILLLCAFGFWMFSIHL). The Perinuclear space segment spans residues 123 to 379 (PSKMKVWQDD…PHQNPYPKRD (257 aa)). Positions 141–182 (LRLYQEKVRHHSGEIQDLRGSMNQLIAKLQEMEAMSDEQKMA) form a coiled coil. One can recognise an SUN domain in the interval 205-364 (GASIDFEHTS…YRVRVHGSVA (160 aa)).

Probable homotrimer. Interacts with DNAJB13. In terms of processing, highly glycosylated in the Golgi apparatus during spermiogenesis. Sperm (at protein level). Widely expressed. Conflictingly shown to be specifically expressed in testis.

It is found in the nucleus inner membrane. The protein resides in the golgi apparatus. Plays an essential role in anchoring sperm head to the tail. Is responsible for the attachment of the coupling apparatus to the sperm nuclear envelope. In Homo sapiens (Human), this protein is SUN domain-containing protein 5 (SUN5).